A 268-amino-acid chain; its full sequence is Energy-coupling factor transporter transmembrane protein EcfT (268 aa).

5 consecutive transmembrane segments (helical) span residues 29–49 (VFIF…TVAV), 75–95 (IIIV…EVIV), 107–127 (LIEG…ASLL), 152–172 (LPTH…PTLI), and 242–262 (WGLK…AVMA).

It belongs to the energy-coupling factor EcfT family. As to quaternary structure, forms a stable energy-coupling factor (ECF) transporter complex composed of 2 membrane-embedded substrate-binding proteins (S component), 2 ATP-binding proteins (A component) and 2 transmembrane proteins (T component). May be able to interact with more than 1 S component at a time.

It is found in the cell membrane. Transmembrane (T) component of an energy-coupling factor (ECF) ABC-transporter complex. Unlike classic ABC transporters this ECF transporter provides the energy necessary to transport a number of different substrates. The protein is Energy-coupling factor transporter transmembrane protein EcfT of Bacillus selenitireducens (strain ATCC 700615 / DSM 15326 / MLS10).